Consider the following 79-residue polypeptide: D-alanyl carrier protein (79 aa).

The Carrier domain occupies Met1–Arg77. The residue at position 35 (Ser35) is an O-(pantetheine 4'-phosphoryl)serine.

Belongs to the DltC family. Post-translationally, 4'-phosphopantetheine is transferred from CoA to a specific serine of apo-DCP.

It is found in the cytoplasm. It functions in the pathway cell wall biogenesis; lipoteichoic acid biosynthesis. Carrier protein involved in the D-alanylation of lipoteichoic acid (LTA). The loading of thioester-linked D-alanine onto DltC is catalyzed by D-alanine--D-alanyl carrier protein ligase DltA. The DltC-carried D-alanyl group is further transferred to cell membrane phosphatidylglycerol (PG) by forming an ester bond, probably catalyzed by DltD. D-alanylation of LTA plays an important role in modulating the properties of the cell wall in Gram-positive bacteria, influencing the net charge of the cell wall. This is D-alanyl carrier protein from Streptococcus thermophilus (strain CNRZ 1066).